The following is a 645-amino-acid chain: DNA mismatch repair protein MutL (645 aa).

2 disordered regions span residues 353–381 and 395–420; these read RPENQLGGSVPAAAEPRPTGPDAGEFGPQ and QGEPFARPAGGGSGSGYQYSPRPTTG.

Belongs to the DNA mismatch repair MutL/HexB family.

This protein is involved in the repair of mismatches in DNA. It is required for dam-dependent methyl-directed DNA mismatch repair. May act as a 'molecular matchmaker', a protein that promotes the formation of a stable complex between two or more DNA-binding proteins in an ATP-dependent manner without itself being part of a final effector complex. The chain is DNA mismatch repair protein MutL from Pseudomonas syringae pv. tomato (strain ATCC BAA-871 / DC3000).